Reading from the N-terminus, the 120-residue chain is NAD(P)H-quinone oxidoreductase subunit 3 (120 aa).

3 consecutive transmembrane segments (helical) span residues 6–26 (GYDAFLGFLLIAAAVPALALI), 64–84 (MFALVFVIFDVETVFLYPWAV), and 89–109 (LGVLAFIEALIFITILLVALA).

It belongs to the complex I subunit 3 family. NDH-1 can be composed of about 15 different subunits; different subcomplexes with different compositions have been identified which probably have different functions.

The protein resides in the cellular thylakoid membrane. It carries out the reaction a plastoquinone + NADH + (n+1) H(+)(in) = a plastoquinol + NAD(+) + n H(+)(out). The catalysed reaction is a plastoquinone + NADPH + (n+1) H(+)(in) = a plastoquinol + NADP(+) + n H(+)(out). Its function is as follows. NDH-1 shuttles electrons from an unknown electron donor, via FMN and iron-sulfur (Fe-S) centers, to quinones in the respiratory and/or the photosynthetic chain. The immediate electron acceptor for the enzyme in this species is believed to be plastoquinone. Couples the redox reaction to proton translocation, and thus conserves the redox energy in a proton gradient. Cyanobacterial NDH-1 also plays a role in inorganic carbon-concentration. The sequence is that of NAD(P)H-quinone oxidoreductase subunit 3 from Parasynechococcus marenigrum (strain WH8102).